An 835-amino-acid polypeptide reads, in one-letter code: Telomere length regulation protein TEL2 homolog (835 aa).

Disordered regions lie at residues 455-501 (SADC…LAPY) and 629-648 (LSHE…HSIR). A compositionally biased stretch (low complexity) spans 464 to 473 (ESSPSKSCPK). The span at 474 to 486 (AIEKSKMEAKADQ) shows a compositional bias: basic and acidic residues. Residues 488 to 499 (SDSELDSDDDLA) show a composition bias toward acidic residues. Residues 636–648 (ESRSTGTGQHSIR) show a composition bias toward polar residues.

Belongs to the TEL2 family.

The protein resides in the cytoplasm. Its subcellular location is the membrane. It is found in the nucleus. The protein localises to the chromosome. It localises to the telomere. Regulator of the DNA damage response (DDR). Part of the TTT complex that is required to stabilize protein levels of the phosphatidylinositol 3-kinase-related protein kinase (PIKK) family proteins. Promotes assembly, stabilizes and maintains the activity of TORC complexes, which regulate cell growth and survival in response to nutrient and hormonal signals. May be involved in telomere length regulation. The chain is Telomere length regulation protein TEL2 homolog (telo2) from Xenopus laevis (African clawed frog).